The following is an 89-amino-acid chain: Small ribosomal subunit protein uS15 (89 aa).

The protein belongs to the universal ribosomal protein uS15 family. Part of the 30S ribosomal subunit. Forms a bridge to the 50S subunit in the 70S ribosome, contacting the 23S rRNA.

Its function is as follows. One of the primary rRNA binding proteins, it binds directly to 16S rRNA where it helps nucleate assembly of the platform of the 30S subunit by binding and bridging several RNA helices of the 16S rRNA. Functionally, forms an intersubunit bridge (bridge B4) with the 23S rRNA of the 50S subunit in the ribosome. The sequence is that of Small ribosomal subunit protein uS15 from Nitrosospira multiformis (strain ATCC 25196 / NCIMB 11849 / C 71).